We begin with the raw amino-acid sequence, 182 residues long: ATP-dependent protease subunit HslV (182 aa).

Residue Thr12 is part of the active site. The Na(+) site is built by Ala167, Cys170, and Thr173.

This sequence belongs to the peptidase T1B family. HslV subfamily. In terms of assembly, a double ring-shaped homohexamer of HslV is capped on each side by a ring-shaped HslU homohexamer. The assembly of the HslU/HslV complex is dependent on binding of ATP.

Its subcellular location is the cytoplasm. The enzyme catalyses ATP-dependent cleavage of peptide bonds with broad specificity.. Its activity is regulated as follows. Allosterically activated by HslU binding. Protease subunit of a proteasome-like degradation complex believed to be a general protein degrading machinery. This chain is ATP-dependent protease subunit HslV, found in Paramagnetospirillum magneticum (strain ATCC 700264 / AMB-1) (Magnetospirillum magneticum).